We begin with the raw amino-acid sequence, 657 residues long: Pentatricopeptide repeat-containing protein CRR2, chloroplastic (657 aa).

The N-terminal 51 residues, Met1 to Gln51, are a transit peptide targeting the chloroplast. PPR repeat units follow at residues Ala45–Pro75, Ser76–Gln110, Asp111–Arg141, Thr142–Ser176, Asp177–Ser215, His216–Arg246, Asn247–Glu277, Asn284–Ser318, Ile319–Arg349, Asp350–Pro384, Thr385–Pro420, and Gln421–Glu451. The segment at Val456–Arg531 is type E motif. The segment at Arg532–Lys562 is type E(+) motif. Residues Glu563–Trp657 form a type DYW motif region.

This sequence belongs to the PPR family. PCMP-H subfamily.

It localises to the plastid. The protein resides in the chloroplast. Functionally, required for the intergenic processing between chloroplast rsp7 and ndhB transcripts. Necessary for chloroplast NADH dehydrogenase-like (NDH) complex-dependent cyclic electron transport around PSI (CET). The protein is Pentatricopeptide repeat-containing protein CRR2, chloroplastic of Arabidopsis thaliana (Mouse-ear cress).